The primary structure comprises 125 residues: Small ribosomal subunit protein bS6 (125 aa).

This sequence belongs to the bacterial ribosomal protein bS6 family.

Functionally, binds together with bS18 to 16S ribosomal RNA. This chain is Small ribosomal subunit protein bS6, found in Campylobacter jejuni subsp. jejuni serotype O:23/36 (strain 81-176).